A 54-amino-acid polypeptide reads, in one-letter code: VTSYTLNEVVPLKDVVPEWVRIGFSATTGAEFAAHEVLSWSFHSELGGTSASKQ.

Belongs to the leguminous lectin family. Tetramer of two alpha and two beta chains.

This Lathyrus hirsutus (Rough pea) protein is Lectin alpha-1 chain.